The primary structure comprises 145 residues: Superoxide dismutase [Cu-Zn] (145 aa).

3 residues coordinate Cu cation: His37, His39, and His54. Cys48 and Cys137 are joined by a disulfide. The Zn(2+) site is built by His54, His62, His71, and Asp74. Residue His111 participates in Cu cation binding.

Belongs to the Cu-Zn superoxide dismutase family. As to quaternary structure, homodimer. Cu cation is required as a cofactor. Requires Zn(2+) as cofactor.

Its subcellular location is the cytoplasm. The enzyme catalyses 2 superoxide + 2 H(+) = H2O2 + O2. Destroys radicals which are normally produced within the cells and which are toxic to biological systems. This Drosophila busckii (Fruit fly) protein is Superoxide dismutase [Cu-Zn].